A 256-amino-acid polypeptide reads, in one-letter code: MAPFKQNAKNKGPIRGKQFNNKFQRGGLSHNAKRKRKWVPEDKVFDGSLKEGQGFAFKRKEKVKHEYNKLLRKERKRKQESKVQLQEEYPEHLKHLYLAERERLDEEEQEKKKKRCKGRAVEEDIEEDDDKLNKDLGSSSSEKNITNTSTDQTIAPASSNEPAQPESSHKTTFFQRKQNISSYQKTKQEYERIKEERARKREEILKDKAQREEALKKYKEKKIATYQLLKRKTKKGQPNLNLQMELLLQKIQAQRK.

Disordered regions lie at residues 1–35 (MAPF…AKRK) and 72–190 (RKER…KQEY). Basic and acidic residues predominate over residues 89 to 104 (YPEHLKHLYLAERERL). Residues 136 to 185 (LGSSSSEKNITNTSTDQTIAPASSNEPAQPESSHKTTFFQRKQNISSYQK) show a composition bias toward polar residues.

It belongs to the TAP26 family.

In Danio rerio (Zebrafish), this protein is Thyroid transcription factor 1-associated protein 26 homolog (ccdc59).